A 350-amino-acid chain; its full sequence is Beta-hexosaminidase (350 aa).

Substrate contacts are provided by residues Asp62, Arg70, Arg133, and 163–164 (KH). Residue His176 is the Proton donor/acceptor of the active site. The active-site Nucleophile is Asp248.

Belongs to the glycosyl hydrolase 3 family. NagZ subfamily.

It localises to the cytoplasm. The enzyme catalyses Hydrolysis of terminal non-reducing N-acetyl-D-hexosamine residues in N-acetyl-beta-D-hexosaminides.. The protein operates within cell wall biogenesis; peptidoglycan recycling. Plays a role in peptidoglycan recycling by cleaving the terminal beta-1,4-linked N-acetylglucosamine (GlcNAc) from peptide-linked peptidoglycan fragments, giving rise to free GlcNAc, anhydro-N-acetylmuramic acid and anhydro-N-acetylmuramic acid-linked peptides. This is Beta-hexosaminidase from Haemophilus influenzae (strain PittEE).